The sequence spans 299 residues: tRNA dimethylallyltransferase (299 aa).

11-18 (GPTAVGKT) provides a ligand contact to ATP. 13–18 (TAVGKT) serves as a coordination point for substrate. Residues 36–39 (DSQQ) form an interaction with substrate tRNA region.

It belongs to the IPP transferase family. In terms of assembly, monomer. Mg(2+) is required as a cofactor.

The enzyme catalyses adenosine(37) in tRNA + dimethylallyl diphosphate = N(6)-dimethylallyladenosine(37) in tRNA + diphosphate. Functionally, catalyzes the transfer of a dimethylallyl group onto the adenine at position 37 in tRNAs that read codons beginning with uridine, leading to the formation of N6-(dimethylallyl)adenosine (i(6)A). This is tRNA dimethylallyltransferase from Streptococcus pyogenes serotype M6 (strain ATCC BAA-946 / MGAS10394).